The following is a 471-amino-acid chain: Heat shock 70 kDa protein 13 (471 aa).

An N-terminal signal peptide occupies residues 1–22 (MAGEMTILGSAVLTLLLAGYLA). The tract at residues 315 to 337 (ENDRKGPPTSDSELPKDKFSQAN) is disordered.

This sequence belongs to the heat shock protein 70 family. In terms of assembly, binds UBQLN2.

The protein localises to the microsome. It localises to the endoplasmic reticulum. Has peptide-independent ATPase activity. The polypeptide is Heat shock 70 kDa protein 13 (HSPA13) (Bos taurus (Bovine)).